Consider the following 339-residue polypeptide: Anthranilate phosphoribosyltransferase (339 aa).

5-phospho-alpha-D-ribose 1-diphosphate-binding positions include G81, 84-85 (GD), 91-94 (NIST), 109-117 (KHGNRAASS), and S121. G81 is an anthranilate binding site. Residue S93 coordinates Mg(2+). N112 lines the anthranilate pocket. Anthranilate is bound at residue R167. 2 residues coordinate Mg(2+): D226 and E227.

Belongs to the anthranilate phosphoribosyltransferase family. Homodimer. Mg(2+) serves as cofactor.

The catalysed reaction is N-(5-phospho-beta-D-ribosyl)anthranilate + diphosphate = 5-phospho-alpha-D-ribose 1-diphosphate + anthranilate. It participates in amino-acid biosynthesis; L-tryptophan biosynthesis; L-tryptophan from chorismate: step 2/5. In terms of biological role, catalyzes the transfer of the phosphoribosyl group of 5-phosphorylribose-1-pyrophosphate (PRPP) to anthranilate to yield N-(5'-phosphoribosyl)-anthranilate (PRA). The protein is Anthranilate phosphoribosyltransferase of Maricaulis maris (strain MCS10) (Caulobacter maris).